The following is a 404-amino-acid chain: Protein translocase subunit SecD (404 aa).

A run of 6 helical transmembrane segments spans residues 7–27 (HYIWLFLVIFVPALILYFNKV), 239–259 (LIALGVISVFMIAIYKIPGIV), 262–282 (IALLINGVLVLGLLSGIGAAL), 283–303 (TLPGIAGFILTLGMAVDSNVI), 330–350 (FPAIIDGNITTLLVAAVLFFL), and 357–377 (GFAVTLSLGVVATIITGVFVS).

It belongs to the SecD/SecF family. SecD subfamily. Forms a complex with SecF. Part of the essential Sec protein translocation apparatus which comprises SecA, SecYEG and auxiliary proteins SecDF. Other proteins may also be involved.

The protein resides in the cell inner membrane. Functionally, part of the Sec protein translocase complex. Interacts with the SecYEG preprotein conducting channel. SecDF uses the proton motive force (PMF) to complete protein translocation after the ATP-dependent function of SecA. The polypeptide is Protein translocase subunit SecD (Leptotrichia buccalis (strain ATCC 14201 / DSM 1135 / JCM 12969 / NCTC 10249 / C-1013-b)).